Here is a 139-residue protein sequence, read N- to C-terminus: Iron-sulfur cluster assembly 1 homolog, mitochondrial (139 aa).

Cysteine 52, cysteine 117, and cysteine 119 together coordinate Fe cation.

It belongs to the HesB/IscA family.

The protein resides in the mitochondrion. Functionally, involved in the assembly of mitochondrial iron-sulfur proteins. Probably involved in the binding of an intermediate of Fe/S cluster assembly. The polypeptide is Iron-sulfur cluster assembly 1 homolog, mitochondrial (isca1) (Dictyostelium discoideum (Social amoeba)).